The following is a 635-amino-acid chain: MGFLVDTQKEGGGHSWGYVRSLVRRKQVDSANGQSHGHQLARALTVPHLVAIGVGATIGAGVYILVGTVAREHSGPSLALSFLIAGIAAGLSAFCYAELSSRCPSAGSAYHYSYICVGEGVAWIIGWALILEYTIGGSAVARGISPNLALIFGGEDGLPAILARHQIPGLDIVVDPCAAILVFVVTGLLCMGIKESTFAQGIVTAVNVCVLLFVIVAGSYLGFKTGWPGYELPTGFFPFGVDGMFAGSATVFFAFIGFDSVASTAEEVRNPQRDLPIGIGLALLLCCSLYMMVSIVIVGLIPYYAMDPDTPISSAFASHDMQWAVYLITLGAVMALCSALMGALLPQPRILMAMARDGLLPSIFSDINKRTQVPVKATVATGLCAATLAFFMDVSQLAGMVSVGTLLAFTMVAISVLILRYVPPDEQPLPSSLQERIDSVSFICGETTSSGHVGTSDSSHQPLIVNNDALVDVPLIKNQEALGCLVLSEETRRIVAGWSIMFTCVGAFLLSYAASSLSFPGLIRYPLCGVGGCLLLAGLIALSSIDQDDARHTFGHSGGYMCPFVPLLPIICILINMYLLVNLGSATWARVSVWLLIGVIVYVFYGRKNSSLANAVYVTTAHAEEIYREHEGSLA.

Residues 1–48 (MGFLVDTQKEGGGHSWGYVRSLVRRKQVDSANGQSHGHQLARALTVPH) lie on the Cytoplasmic side of the membrane. Residues 49-69 (LVAIGVGATIGAGVYILVGTV) form a helical membrane-spanning segment. At 70–76 (AREHSGP) the chain is on the vacuolar side. Residues 77–97 (SLALSFLIAGIAAGLSAFCYA) form a helical membrane-spanning segment. The Cytoplasmic portion of the chain corresponds to 98–108 (ELSSRCPSAGS). Residues 109-131 (AYHYSYICVGEGVAWIIGWALIL) traverse the membrane as a helical segment. Topologically, residues 132–171 (EYTIGGSAVARGISPNLALIFGGEDGLPAILARHQIPGLD) are vacuolar. The chain crosses the membrane as a helical span at residues 172–192 (IVVDPCAAILVFVVTGLLCMG). The Cytoplasmic portion of the chain corresponds to 193 to 200 (IKESTFAQ). Residues 201–221 (GIVTAVNVCVLLFVIVAGSYL) form a helical membrane-spanning segment. The Vacuolar portion of the chain corresponds to 222 to 235 (GFKTGWPGYELPTG). The helical transmembrane segment at 236 to 256 (FFPFGVDGMFAGSATVFFAFI) threads the bilayer. Over 257–280 (GFDSVASTAEEVRNPQRDLPIGIG) the chain is Cytoplasmic. The helical transmembrane segment at 281–301 (LALLLCCSLYMMVSIVIVGLI) threads the bilayer. Topologically, residues 302-324 (PYYAMDPDTPISSAFASHDMQWA) are vacuolar. Residues 325–345 (VYLITLGAVMALCSALMGALL) form a helical membrane-spanning segment. Over 346–376 (PQPRILMAMARDGLLPSIFSDINKRTQVPVK) the chain is Cytoplasmic. The helical transmembrane segment at 377 to 397 (ATVATGLCAATLAFFMDVSQL) threads the bilayer. A topological domain (vacuolar) is located at residue alanine 398. The chain crosses the membrane as a helical span at residues 399–419 (GMVSVGTLLAFTMVAISVLIL). Residues 420 to 493 (RYVPPDEQPL…CLVLSEETRR (74 aa)) are Cytoplasmic-facing. The chain crosses the membrane as a helical span at residues 494–514 (IVAGWSIMFTCVGAFLLSYAA). Over 515-524 (SSLSFPGLIR) the chain is Vacuolar. A helical transmembrane segment spans residues 525–545 (YPLCGVGGCLLLAGLIALSSI). Residues 546–560 (DQDDARHTFGHSGGY) are Cytoplasmic-facing. The chain crosses the membrane as a helical span at residues 561-581 (MCPFVPLLPIICILINMYLLV). Residues 582-585 (NLGS) lie on the Vacuolar side of the membrane. Residues 586-606 (ATWARVSVWLLIGVIVYVFYG) form a helical membrane-spanning segment. At 607–635 (RKNSSLANAVYVTTAHAEEIYREHEGSLA) the chain is on the cytoplasmic side.

It belongs to the amino acid-polyamine-organocation (APC) superfamily. Cationic amino acid transporter (CAT) (TC 2.A.3.3) family. In terms of tissue distribution, expressed in roots, stems, flowers, leaves, and siliques.

The protein localises to the vacuole membrane. In terms of biological role, permease involved in the transport of the cationic amino acids. The protein is Cationic amino acid transporter 2, vacuolar (CAT2) of Arabidopsis thaliana (Mouse-ear cress).